The sequence spans 158 residues: NADH-quinone oxidoreductase subunit B (158 aa).

4 residues coordinate [4Fe-4S] cluster: Cys37, Cys38, Cys102, and Cys132.

It belongs to the complex I 20 kDa subunit family. NDH-1 is composed of 14 different subunits. Subunits NuoB, C, D, E, F, and G constitute the peripheral sector of the complex. Requires [4Fe-4S] cluster as cofactor.

It is found in the cell inner membrane. The catalysed reaction is a quinone + NADH + 5 H(+)(in) = a quinol + NAD(+) + 4 H(+)(out). Its function is as follows. NDH-1 shuttles electrons from NADH, via FMN and iron-sulfur (Fe-S) centers, to quinones in the respiratory chain. The immediate electron acceptor for the enzyme in this species is believed to be ubiquinone. Couples the redox reaction to proton translocation (for every two electrons transferred, four hydrogen ions are translocated across the cytoplasmic membrane), and thus conserves the redox energy in a proton gradient. This chain is NADH-quinone oxidoreductase subunit B, found in Thiobacillus denitrificans (strain ATCC 25259 / T1).